We begin with the raw amino-acid sequence, 248 residues long: 2,3-bisphosphoglycerate-dependent phosphoglycerate mutase (248 aa).

Residues 8–15 (RHGESTWN), 21–22 (TG), R60, 87–90 (ERHY), K98, and 114–115 (RR) each bind substrate. H9 acts as the Tele-phosphohistidine intermediate in catalysis. The active-site Proton donor/acceptor is E87. The interval 118–137 (DTPPPALEPTDPRASYDDPR) is disordered. The segment covering 127-137 (TDPRASYDDPR) has biased composition (basic and acidic residues). Position 183–184 (183–184 (GN)) interacts with substrate.

This sequence belongs to the phosphoglycerate mutase family. BPG-dependent PGAM subfamily. In terms of assembly, homodimer.

The catalysed reaction is (2R)-2-phosphoglycerate = (2R)-3-phosphoglycerate. It functions in the pathway carbohydrate degradation; glycolysis; pyruvate from D-glyceraldehyde 3-phosphate: step 3/5. Catalyzes the interconversion of 2-phosphoglycerate and 3-phosphoglycerate. The polypeptide is 2,3-bisphosphoglycerate-dependent phosphoglycerate mutase (Cupriavidus necator (strain ATCC 17699 / DSM 428 / KCTC 22496 / NCIMB 10442 / H16 / Stanier 337) (Ralstonia eutropha)).